Reading from the N-terminus, the 244-residue chain is Tetraspanin-7 (244 aa).

Topologically, residues 1-11 (METKPVITCLK) are cytoplasmic. A helical membrane pass occupies residues 12–35 (TLLIIYSFVFWITGVILLAVGVWG). Topologically, residues 36 to 51 (KLTLGTYISLIAENST) are extracellular. Asparagine 49 carries an N-linked (GlcNAc...) asparagine glycan. The chain crosses the membrane as a helical span at residues 52–70 (NAPYVLIGTGTTIVVFGLF). The Cytoplasmic segment spans residues 71–81 (GCFATCRGSPW). A helical membrane pass occupies residues 82–107 (MLKLYAMFLSLVFLAELVAGISGFVF). Over 108–208 (RHEIKDTFLR…LVTSFMETNM (101 aa)) the chain is Extracellular. N-linked (GlcNAc...) asparagine glycans are attached at residues asparagine 150, asparagine 153, asparagine 172, and asparagine 183. The helical transmembrane segment at 209–229 (GIIAGVAFGIAFSQLIGMLLA) threads the bilayer. Residues 230 to 244 (CCLSRFITANQYEMV) lie on the Cytoplasmic side of the membrane.

Belongs to the tetraspanin (TM4SF) family.

It is found in the membrane. May be involved in cell proliferation and cell motility. This chain is Tetraspanin-7 (TSPAN7), found in Pongo pygmaeus (Bornean orangutan).